The primary structure comprises 389 residues: Lipid-A-disaccharide synthase (389 aa).

This sequence belongs to the LpxB family.

It carries out the reaction a lipid X + a UDP-2-N,3-O-bis[(3R)-3-hydroxyacyl]-alpha-D-glucosamine = a lipid A disaccharide + UDP + H(+). Its pathway is bacterial outer membrane biogenesis; LPS lipid A biosynthesis. Its function is as follows. Condensation of UDP-2,3-diacylglucosamine and 2,3-diacylglucosamine-1-phosphate to form lipid A disaccharide, a precursor of lipid A, a phosphorylated glycolipid that anchors the lipopolysaccharide to the outer membrane of the cell. This is Lipid-A-disaccharide synthase from Burkholderia ambifaria (strain ATCC BAA-244 / DSM 16087 / CCUG 44356 / LMG 19182 / AMMD) (Burkholderia cepacia (strain AMMD)).